We begin with the raw amino-acid sequence, 269 residues long: MSSMNKRVFDILRELDSLVDFSRAKLQWDILIILATKGPSSTTEISQTINTSRKSIIDAIRKLVDKELVTKVKGDIYGLSEKGEKLLESFDSIMSINVTDKPDSSIESNSISLTNIAEYFYMLEILKMALLNKQITIDKASHELGISKQTLKYYIETFTENKLLKVVNQESVLGKSKKIYVLTDESRKLVSRLPELTRLKRNLPLKILLKLTGSYRYEIALTKVMLFNVISIPVLMYLKDQLGILEAIWLYVIILLPLLSIFAEIFNRI.

The Cytoplasmic portion of the chain corresponds to 1 to 217 (MSSMNKRVFD…LLKLTGSYRY (217 aa)). Positions 42–65 (TTEISQTINTSRKSIIDAIRKLVD) form a DNA-binding region, H-T-H motif. The chain crosses the membrane as a helical span at residues 218–238 (EIALTKVMLFNVISIPVLMYL). Residues 239–241 (KDQ) are Extracellular-facing. A helical membrane pass occupies residues 242–262 (LGILEAIWLYVIILLPLLSIF). At 263–269 (AEIFNRI) the chain is on the cytoplasmic side.

It localises to the cell membrane. Its function is as follows. Involved in regulation of archaellar gene expression. May activate flaB transcription upon nutrient starvation by acting on the flaB promoter. This Sulfolobus acidocaldarius (strain ATCC 33909 / DSM 639 / JCM 8929 / NBRC 15157 / NCIMB 11770) protein is HTH-type transcriptional activator ArnR1.